A 504-amino-acid polypeptide reads, in one-letter code: UDP-N-acetylmuramoylalanine--D-glutamate ligase (504 aa).

129-135 contributes to the ATP binding site; the sequence is GTNGKTT.

The protein belongs to the MurCDEF family.

It localises to the cytoplasm. The enzyme catalyses UDP-N-acetyl-alpha-D-muramoyl-L-alanine + D-glutamate + ATP = UDP-N-acetyl-alpha-D-muramoyl-L-alanyl-D-glutamate + ADP + phosphate + H(+). The protein operates within cell wall biogenesis; peptidoglycan biosynthesis. Cell wall formation. Catalyzes the addition of glutamate to the nucleotide precursor UDP-N-acetylmuramoyl-L-alanine (UMA). The protein is UDP-N-acetylmuramoylalanine--D-glutamate ligase of Burkholderia thailandensis (strain ATCC 700388 / DSM 13276 / CCUG 48851 / CIP 106301 / E264).